The sequence spans 377 residues: MKATWDIFCSVVDNYGDIGVTWRLARQLVAEHGLAVRLWVDDLNAFTPMCPGADATAAQQWQHGVDVRHWPAAWLPVAPADVVIGAFACQLPAAYVEAMRARPQPPLWLNLEYLSAEDWVEGCHGLPSPQPNGLRKVFFFPGFTDKTGGLLREGSLLARRDGFQQSAEARRAFLQGLGVDLVPGALLISLFAYENPQLGNWLDALATADQPCHLLVPQGRVVAGLSQWLGEGPLHVGDVRTRGALTVQVLPFVSQDDFDRLLWSCDFNAVRGEDSFVRAQWAGQPMLWHIYVQDENAHWEKLEAFLAHYRCGLSDDADAALLGLWRAWNMDFDMGQAWRAARQHWPELQQHARLWGARQAAQPDLATALVHFYRNSL.

Residue tyrosine 15 coordinates dTDP-beta-L-rhamnose. Aspartate 17 serves as the catalytic Proton acceptor. DTDP-beta-L-rhamnose is bound by residues tyrosine 193, glutamine 255, and 271–275; that span reads RGEDS. Residue glutamate 273 is part of the active site.

The protein belongs to the glycosyltransferase 104 family.

The catalysed reaction is dTDP-beta-L-rhamnose + L-arginyl-[protein] = N(omega)-(alpha-L-rhamnosyl)-L-arginyl-[protein] + dTDP + H(+). In terms of biological role, protein-arginine rhamnosyltransferase that catalyzes the transfer of a single rhamnose to elongation factor P (EF-P) on 'Lys-32', a modification required for EF-P-dependent rescue of polyproline stalled ribosomes. This chain is Protein-arginine rhamnosyltransferase, found in Pseudomonas putida (strain ATCC 47054 / DSM 6125 / CFBP 8728 / NCIMB 11950 / KT2440).